A 41-amino-acid chain; its full sequence is Large ribosomal subunit protein bL36 (41 aa).

Belongs to the bacterial ribosomal protein bL36 family.

The protein is Large ribosomal subunit protein bL36 of Bradyrhizobium diazoefficiens (strain JCM 10833 / BCRC 13528 / IAM 13628 / NBRC 14792 / USDA 110).